An 80-amino-acid chain; its full sequence is Bacteriochlorophyll c-binding protein (80 aa).

A bacteriochlorophyll c is bound at residue His25. Residues 49–80 are disordered; sequence PGVSRSGSGEGAFSSSPSNGFRPKRIRSRFNR. Residues 54-80 constitute a propeptide that is removed on maturation; the sequence is SGSGEGAFSSSPSNGFRPKRIRSRFNR. Residues 70–80 show a composition bias toward basic residues; the sequence is RPKRIRSRFNR.

Belongs to the BChl C/E-binding protein family.

Its subcellular location is the chlorosome. The protein resides in the chlorosome envelope. Its function is as follows. Component of the photosynthetic apparatus. The light harvesting B740 complex binds bacteriochlorophyll c. The sequence is that of Bacteriochlorophyll c-binding protein (cmsA) from Chloroflexus aurantiacus (strain ATCC 29366 / DSM 635 / J-10-fl).